A 488-amino-acid chain; its full sequence is Protein nucleotidyltransferase YdiU (488 aa).

Residues glycine 91, glycine 93, arginine 94, lysine 114, aspartate 126, glycine 127, arginine 177, and arginine 184 each contribute to the ATP site. The Proton acceptor role is filled by aspartate 253. 2 residues coordinate Mg(2+): asparagine 254 and aspartate 263. Residue aspartate 263 coordinates ATP.

The protein belongs to the SELO family. Requires Mg(2+) as cofactor. Mn(2+) serves as cofactor.

The enzyme catalyses L-seryl-[protein] + ATP = 3-O-(5'-adenylyl)-L-seryl-[protein] + diphosphate. The catalysed reaction is L-threonyl-[protein] + ATP = 3-O-(5'-adenylyl)-L-threonyl-[protein] + diphosphate. It carries out the reaction L-tyrosyl-[protein] + ATP = O-(5'-adenylyl)-L-tyrosyl-[protein] + diphosphate. It catalyses the reaction L-histidyl-[protein] + UTP = N(tele)-(5'-uridylyl)-L-histidyl-[protein] + diphosphate. The enzyme catalyses L-seryl-[protein] + UTP = O-(5'-uridylyl)-L-seryl-[protein] + diphosphate. The catalysed reaction is L-tyrosyl-[protein] + UTP = O-(5'-uridylyl)-L-tyrosyl-[protein] + diphosphate. In terms of biological role, nucleotidyltransferase involved in the post-translational modification of proteins. It can catalyze the addition of adenosine monophosphate (AMP) or uridine monophosphate (UMP) to a protein, resulting in modifications known as AMPylation and UMPylation. This Bacillus cereus (strain AH187) protein is Protein nucleotidyltransferase YdiU.